The sequence spans 487 residues: UDP-glycosyltransferase 72E1 (487 aa).

His18 functions as the Proton acceptor in the catalytic mechanism. Position 18 (His18) interacts with an anthocyanidin. Catalysis depends on Asp116, which acts as the Charge relay. 7 residues coordinate UDP-alpha-D-glucose: Ala351, Gln353, His368, Trp371, Asn372, Ser373, and Glu376. Ala391 provides a ligand contact to an anthocyanidin. UDP-alpha-D-glucose is bound by residues Glu392 and Gln393.

Belongs to the UDP-glycosyltransferase family. As to quaternary structure, interacts with SIS8. Expressed in seedlings, roots and leaves.

The protein resides in the nucleus. The catalysed reaction is (E)-coniferaldehyde + UDP-alpha-D-glucose = 4-O-(beta-D-glucosyl)-4-(E)-coniferyl aldehyde + UDP + H(+). It catalyses the reaction (E)-sinapaldehyde + UDP-alpha-D-glucose = 4-O-(beta-D-glucosyl)-4-trans-sinapoyl aldehyde + UDP + H(+). In terms of biological role, UDP-glycosyltransferase that glucosylates coniferyl aldehyde to form coniferyl aldehyde 4-O-glucoside. Glucosylates sinapyl aldehyde to form sinapyl aldehyde 4-O-glucoside. Is not active in presence of coniferyl alcohol or sinapyl alcohol. Can glucosylate the phytotoxic xenobiotic compound 2,4,5-trichlorophenol (TCP). In Arabidopsis thaliana (Mouse-ear cress), this protein is UDP-glycosyltransferase 72E1.